The chain runs to 873 residues: F-box only protein 41 (873 aa).

Over residues 85-97 (ESTSFQGKEQATG) the composition is skewed to polar residues. 3 disordered regions span residues 85–110 (ESTS…HHHH), 163–193 (SSAC…SPAD), and 345–540 (SSSC…PSRS). The segment covering 168-178 (TPPPGPGPGPC) has biased composition (pro residues). Low complexity predominate over residues 179 to 192 (SGPSSASPASPSPA). Positions 207–349 (ALEKLEVDRR…QLQVISSSCG (143 aa)) form a coiled coil. Gly residues predominate over residues 357–371 (GRGGGGSASGPGVRG). Arginine 358 carries the omega-N-methylarginine modification. Polar residues-rich tracts occupy residues 384–414 (VPST…SSGC) and 442–456 (AQAT…QAPR). Serine 476 bears the Phosphoserine mark. Threonine 477 carries the phosphothreonine modification. Residues 548–592 (ILKMRAALFCIFTYLDTRTLLHAAEVCRDWRFVARHPAVWTRVLL) form the F-box domain. The residue at position 760 (serine 760) is a Phosphoserine.

As to quaternary structure, directly interacts with SKP1 and CUL1.

Functionally, substrate-recognition component of the SCF (SKP1-CUL1-F-box protein)-type E3 ubiquitin ligase complex. This is F-box only protein 41 (Fbxo41) from Mus musculus (Mouse).